We begin with the raw amino-acid sequence, 135 residues long: uncharacterized protein (135 aa).

This is an uncharacterized protein from Methanocaldococcus jannaschii (strain ATCC 43067 / DSM 2661 / JAL-1 / JCM 10045 / NBRC 100440) (Methanococcus jannaschii).